The primary structure comprises 502 residues: Lanosterol 14-alpha demethylase (502 aa).

The helical transmembrane segment at 22–42 (GNLASMLLIACAFTLSLVYLF) threads the bilayer. Cys448 is a binding site for heme.

It belongs to the cytochrome P450 family. Heme serves as cofactor. Ubiquitinated by MARCHF6, leading to proteasomal degradation.

It is found in the endoplasmic reticulum membrane. Its subcellular location is the microsome membrane. It carries out the reaction a 14alpha-methyl steroid + 3 reduced [NADPH--hemoprotein reductase] + 3 O2 = a Delta(14) steroid + formate + 3 oxidized [NADPH--hemoprotein reductase] + 4 H2O + 4 H(+). The enzyme catalyses lanosterol + 3 reduced [NADPH--hemoprotein reductase] + 3 O2 = 4,4-dimethyl-5alpha-cholesta-8,14,24-trien-3beta-ol + formate + 3 oxidized [NADPH--hemoprotein reductase] + 4 H2O + 4 H(+). The catalysed reaction is 24,25-dihydrolanosterol + 3 reduced [NADPH--hemoprotein reductase] + 3 O2 = 4,4-dimethyl-8,14-cholestadien-3beta-ol + formate + 3 oxidized [NADPH--hemoprotein reductase] + 4 H2O + 4 H(+). It catalyses the reaction a 14alpha-methyl steroid + reduced [NADPH--hemoprotein reductase] + O2 = a 14alpha-hydroxymethyl steroid + oxidized [NADPH--hemoprotein reductase] + H2O + H(+). It carries out the reaction a 14alpha-hydroxymethyl steroid + reduced [NADPH--hemoprotein reductase] + O2 = a 14alpha-formyl steroid + oxidized [NADPH--hemoprotein reductase] + 2 H2O + H(+). The enzyme catalyses a 14alpha-formyl steroid + reduced [NADPH--hemoprotein reductase] + O2 = a Delta(14) steroid + formate + oxidized [NADPH--hemoprotein reductase] + H2O + 2 H(+). The catalysed reaction is lanosterol + reduced [NADPH--hemoprotein reductase] + O2 = 32-hydroxylanosterol + oxidized [NADPH--hemoprotein reductase] + H2O + H(+). It catalyses the reaction 32-hydroxylanosterol + reduced [NADPH--hemoprotein reductase] + O2 = 32-oxolanosterol + oxidized [NADPH--hemoprotein reductase] + 2 H2O + H(+). It carries out the reaction 32-oxolanosterol + reduced [NADPH--hemoprotein reductase] + O2 = 4,4-dimethyl-5alpha-cholesta-8,14,24-trien-3beta-ol + formate + oxidized [NADPH--hemoprotein reductase] + H2O + 2 H(+). The enzyme catalyses 24,25-dihydrolanosterol + reduced [NADPH--hemoprotein reductase] + O2 = 32-hydroxy-24,25-dihydrolanosterol + oxidized [NADPH--hemoprotein reductase] + H2O + H(+). The catalysed reaction is 32-hydroxy-24,25-dihydrolanosterol + reduced [NADPH--hemoprotein reductase] + O2 = 32-oxo-24,25-dihydrolanosterol + oxidized [NADPH--hemoprotein reductase] + 2 H2O + H(+). It catalyses the reaction 32-oxo-24,25-dihydrolanosterol + reduced [NADPH--hemoprotein reductase] + O2 = 4,4-dimethyl-8,14-cholestadien-3beta-ol + formate + oxidized [NADPH--hemoprotein reductase] + H2O + 2 H(+). Its pathway is steroid biosynthesis; zymosterol biosynthesis; zymosterol from lanosterol: step 1/6. Inhibited by azalanstat. Inhibited by azole antifungal agents ketoconazole, itraconazole and fluconazole. Functionally, sterol 14alpha-demethylase that plays a critical role in the cholesterol biosynthesis pathway, being cholesterol the major sterol component in mammalian membranes as well as a precursor for bile acid and steroid hormone synthesis. Cytochrome P450 monooxygenase that catalyzes the three-step oxidative removal of the 14alpha-methyl group (C-32) of sterols such as lanosterol (lanosta-8,24-dien-3beta-ol) and 24,25-dihydrolanosterol (DHL) in the form of formate, and converts the sterols to 4,4-dimethyl-5alpha-cholesta-8,14,24-trien-3beta-ol and 4,4-dimethyl-8,14-cholestadien-3beta-ol, respectively, which are intermediates of cholesterol biosynthesis. Can also demethylate substrates not intrinsic to mammals, such as eburicol (24-methylene-24,25-dihydrolanosterol), but at a lower rate than DHL. This is Lanosterol 14-alpha demethylase from Bos taurus (Bovine).